Reading from the N-terminus, the 163-residue chain is NADH-quinone oxidoreductase subunit I (163 aa).

4Fe-4S ferredoxin-type domains follow at residues 55 to 84 (RRYP…IDAE) and 94 to 123 (TRYD…EGPN). The [4Fe-4S] cluster site is built by Cys-64, Cys-67, Cys-70, Cys-74, Cys-103, Cys-106, Cys-109, and Cys-113.

The protein belongs to the complex I 23 kDa subunit family. In terms of assembly, NDH-1 is composed of 14 different subunits. Subunits NuoA, H, J, K, L, M, N constitute the membrane sector of the complex. The cofactor is [4Fe-4S] cluster.

The protein resides in the cell inner membrane. It carries out the reaction a quinone + NADH + 5 H(+)(in) = a quinol + NAD(+) + 4 H(+)(out). Its function is as follows. NDH-1 shuttles electrons from NADH, via FMN and iron-sulfur (Fe-S) centers, to quinones in the respiratory chain. The immediate electron acceptor for the enzyme in this species is believed to be ubiquinone. Couples the redox reaction to proton translocation (for every two electrons transferred, four hydrogen ions are translocated across the cytoplasmic membrane), and thus conserves the redox energy in a proton gradient. The chain is NADH-quinone oxidoreductase subunit I (nuoI) from Rhodobacter capsulatus (Rhodopseudomonas capsulata).